Consider the following 187-residue polypeptide: UPF0301 protein Sala_0165 (187 aa).

This sequence belongs to the UPF0301 (AlgH) family.

This Sphingopyxis alaskensis (strain DSM 13593 / LMG 18877 / RB2256) (Sphingomonas alaskensis) protein is UPF0301 protein Sala_0165.